The following is a 1412-amino-acid chain: Ecdysone-induced protein 75B, isoform B (1412 aa).

Residues 1–14 show a composition bias toward low complexity; that stretch reads MEAVQAAAAATSSG. 4 disordered regions span residues 1-96, 110-204, 258-298, and 321-448; these read MEAV…PGGT, QRAT…QQHV, QYQQ…VPPP, and HFQQ…SIPD. Positions 15-25 are enriched in gly residues; it reads GSSGSVPGSGS. Basic and acidic residues predominate over residues 32 to 57; sequence IKTEPIDFEMLHLEENERQQDIEREP. Low complexity predominate over residues 58 to 68; it reads SSSNSNSNSNS. The span at 69-81 shows a compositional bias: polar residues; sequence LTPQRYTHVQVQT. The segment covering 87 to 96 has biased composition (low complexity); the sequence is PTGLTTPGGT. Positions 124–133 are enriched in polar residues; sequence YSQQQGTAAS. Positions 135–150 are enriched in low complexity; the sequence is SAPPETTALLTTTSGT. Positions 151–164 are enriched in polar residues; it reads PQIIITRTLPSNQH. The span at 177 to 203 shows a compositional bias: low complexity; the sequence is HHYQQQQPQRQQSPPPLHHQQQQQQQH. A compositionally biased stretch (pro residues) spans 266-284; sequence PLAPPPPPPPPPPPPPPPQ. Low complexity-rich tracts occupy residues 323-371, 378-403, and 417-447; these read QQQQ…SSHI, SSSSSSNMHHQQQQQQQQSSLGNSVM, and ASSSSSGNSSSSNTNNSSSSSNGEEPSSSIP. A DNA-binding region (nuclear receptor) is located at residues 455-531; it reads TVLCRVCGDK…VGMSRDAVRF (77 aa). 2 NR C4-type zinc fingers span residues 458 to 478 and 495 to 514; these read CRVCGDKASGFHYGVHSCEGC and CTKNQQCSILRINRNRCQYC. The NR LBD domain maps to 565-813; sequence DQPRLLAAVL…QQMWSMEDGN (249 aa). 6 disordered regions span residues 837 to 878, 984 to 1021, 1044 to 1064, 1108 to 1174, 1204 to 1317, and 1368 to 1401; these read KSPL…SALA, LDSPTDSGIESGNEKNECKAVSSGGSSSCSSPRSSVDD, VSVSPVRSPQPSTSSHLKRQI, AEAD…SSHS, ENST…SNSA, and VTVTASNGGPPSAAASPAPSSSPPASVGSPNPGL. Composition is skewed to low complexity over residues 854-866, 1005-1017, 1044-1058, 1110-1155, and 1163-1174; these read GSPSSSQPQGVSL, SSGGSSSCSSPRS, VSVSPVRSPQPSTSS, ADAS…AQSQ, and SSPKASMASSHS. 2 stretches are compositionally biased toward polar residues: residues 1206–1219 and 1231–1253; these read STAASSTTNGVGNR and AVQNQQRWGSSSVITTTCQQRQQ. Low complexity-rich tracts occupy residues 1254 to 1290, 1299 to 1317, and 1372 to 1400; these read SVSPHSNGSSSSSSSSSSSSSSSSSTSSNCSSSSASS, STSNGTSAPASSSSGSNSA, and ASNGGPPSAAASPAPSSSPPASVGSPNPG.

Belongs to the nuclear hormone receptor family. NR1 subfamily.

It localises to the nucleus. Functionally, implicated in the regulation of ecdysone-triggered gene hierarchies. Probably plays a key role in mediating the regulation of the larval molt by 20-OH-ecdysone. The sequence is that of Ecdysone-induced protein 75B, isoform B (Eip75B) from Drosophila melanogaster (Fruit fly).